Here is a 109-residue protein sequence, read N- to C-terminus: Somatostatin-2 (109 aa).

The N-terminal stretch at 1-16 (MQFLASLVSFLLVVWS) is a signal peptide. The propeptide occupies 17–80 (VKATALPVED…EPLENKLEER (64 aa)). Cys98 and Cys109 are oxidised to a cystine.

The protein belongs to the somatostatin family.

Its subcellular location is the secreted. In terms of biological role, somatostatin inhibits the release of somatotropin. This Protopterus annectens (African lungfish) protein is Somatostatin-2 (sst2).